Here is an 81-residue protein sequence, read N- to C-terminus: ATP synthase subunit c (81 aa).

Transmembrane regions (helical) follow at residues 7–27 and 53–73; these read FVAL…CIGI and FLLA…AMMF.

The protein belongs to the ATPase C chain family. In terms of assembly, F-type ATPases have 2 components, F(1) - the catalytic core - and F(0) - the membrane proton channel. F(1) has five subunits: alpha(3), beta(3), gamma(1), delta(1), epsilon(1). F(0) has three main subunits: a(1), b(2) and c(10-14). The alpha and beta chains form an alternating ring which encloses part of the gamma chain. F(1) is attached to F(0) by a central stalk formed by the gamma and epsilon chains, while a peripheral stalk is formed by the delta and b chains.

It localises to the cell inner membrane. Functionally, f(1)F(0) ATP synthase produces ATP from ADP in the presence of a proton or sodium gradient. F-type ATPases consist of two structural domains, F(1) containing the extramembraneous catalytic core and F(0) containing the membrane proton channel, linked together by a central stalk and a peripheral stalk. During catalysis, ATP synthesis in the catalytic domain of F(1) is coupled via a rotary mechanism of the central stalk subunits to proton translocation. Key component of the F(0) channel; it plays a direct role in translocation across the membrane. A homomeric c-ring of between 10-14 subunits forms the central stalk rotor element with the F(1) delta and epsilon subunits. This is ATP synthase subunit c from Azoarcus sp. (strain BH72).